The primary structure comprises 473 residues: GTPase Der (473 aa).

2 EngA-type G domains span residues 3-167 and 203-378; these read FTVA…GKDR and LRVA…RVWN. GTP is bound by residues 9–16, 56–60, 119–122, 209–216, 256–260, and 321–324; these read GRPNVGKS, DTAGL, NKSE, GRPNAGKS, DTAGM, and NKWD. Positions 379 to 463 constitute a KH-like domain; it reads KRISTARLNR…PIRIHFRSAE (85 aa).

Belongs to the TRAFAC class TrmE-Era-EngA-EngB-Septin-like GTPase superfamily. EngA (Der) GTPase family. Associates with the 50S ribosomal subunit.

In terms of biological role, GTPase that plays an essential role in the late steps of ribosome biogenesis. The sequence is that of GTPase Der from Rhizobium etli (strain CIAT 652).